A 131-amino-acid chain; its full sequence is Small ribosomal subunit protein uS8 (131 aa).

It belongs to the universal ribosomal protein uS8 family. In terms of assembly, part of the 30S ribosomal subunit. Contacts proteins S5 and S12.

Functionally, one of the primary rRNA binding proteins, it binds directly to 16S rRNA central domain where it helps coordinate assembly of the platform of the 30S subunit. This is Small ribosomal subunit protein uS8 from Cupriavidus metallidurans (strain ATCC 43123 / DSM 2839 / NBRC 102507 / CH34) (Ralstonia metallidurans).